We begin with the raw amino-acid sequence, 805 residues long: MYNHNLIEKKWAKIWNDQKIYSFQIDKNKPKYYILDMFPYPSGKGLHVGHVKAYMATDVISRWKNALGFNVLHPIGWDAFGLPAEQYAIQTNNHPAKFTQENINNFRTQLKRLGFNYDYRLEVDTTNKNYFKWTQWIFKKLYEHDLAYQADIEVNWCEQLGTVLANEEVLTDENGNKISERGSYPVIKKKMRQWVLKITAFADQLIDDLENLNWPNSIKAMQVNWINKSVGASIKFEIDQLDNQTIEVFSSRADTLFGASFLALSFDHPLVKQKLITDKNNAIEQFIKDNSIDQRVRYQGINTNYFAIHPITKKKIPIYLADYILSDYGTGAVMGVPAHDERDYQFAKQYDLEIIPVIKADQYPYLLDGEHINSEFNNGLNNEQAIQKTIAYLREHNLGDQKINYKLRDWIFSRQRYWGEPFPVLFDEEDNIYLLKDSELPVELPQLSDFSPNKDGLPPLANADDQWLHPIIDQKKYRREINTMPQWAGSCWYYLAYLLKLTDLNQADGDQNYLALNSEKAKELFDHFMPVDLYVGGQEHAVLHLLYARFWYKFLHHIKIVSSTEPFSQLINQGMILGEDNTKMSKSKGNIINPDDLVLSHGADTIRTYVMFMGPLNASLAWNSNALNGTRKFLERVYNLFDRVEINDSINQNLNYDYHNFLKKINKHLENFEFNLVVSEMMIFINACYKQTQVNKEMITNFLIVLSFFAPYLAEELNSKLNNPTLLYKMRLAQWDEAYLVKNTTTISCSINGKFKLVHEFDLDSDEQEVANYFLNQDLIKRNLENKKLVKTIFVKNKVINFIIK.

A 'HIGH' region motif is present at residues 39-50 (PYPSGKGLHVGH). A 'KMSKS' region motif is present at residues 583–587 (KMSKS). Lysine 586 serves as a coordination point for ATP.

The protein belongs to the class-I aminoacyl-tRNA synthetase family.

The protein resides in the cytoplasm. The catalysed reaction is tRNA(Leu) + L-leucine + ATP = L-leucyl-tRNA(Leu) + AMP + diphosphate. This is Leucine--tRNA ligase from Mycoplasmoides gallisepticum (strain R(low / passage 15 / clone 2)) (Mycoplasma gallisepticum).